Consider the following 130-residue polypeptide: MTTESLETLVEQLSGLTVLELSQLKKLLEEKWDVTAAAPVVAVAGAAAAGDAPASAEPTEFAVILEDVPSDKKIGVLKVVREVTGLALKEAKEMTEGLPKTVKEKTSKSDAEDTVKKLQEAGAKAVAKGL.

It belongs to the bacterial ribosomal protein bL12 family. In terms of assembly, homodimer. Part of the ribosomal stalk of the 50S ribosomal subunit. Forms a multimeric L10(L12)X complex, where L10 forms an elongated spine to which 2 to 4 L12 dimers bind in a sequential fashion. Binds GTP-bound translation factors.

Its function is as follows. Forms part of the ribosomal stalk which helps the ribosome interact with GTP-bound translation factors. Is thus essential for accurate translation. This Chlamydia trachomatis serovar L2 (strain ATCC VR-902B / DSM 19102 / 434/Bu) protein is Large ribosomal subunit protein bL12.